An 864-amino-acid polypeptide reads, in one-letter code: Bifunctional uridylyltransferase/uridylyl-removing enzyme (864 aa).

The interval 1 to 328 (MLFPYFPLSE…QTNEPVQVRL (328 aa)) is uridylyltransferase. A uridylyl-removing region spans residues 329–686 (LDKEFQCVNN…ISNRFSEGGT (358 aa)). Residues 446–562 (VDEHIVRTLL…LHFAEAVQNN (117 aa)) enclose the HD domain. 2 consecutive ACT domains span residues 687 to 766 (EIFV…TFRA) and 793 to 864 (EMEL…LEPK).

This sequence belongs to the GlnD family. Mg(2+) serves as cofactor.

The catalysed reaction is [protein-PII]-L-tyrosine + UTP = [protein-PII]-uridylyl-L-tyrosine + diphosphate. It carries out the reaction [protein-PII]-uridylyl-L-tyrosine + H2O = [protein-PII]-L-tyrosine + UMP + H(+). Uridylyltransferase (UTase) activity is inhibited by glutamine, while glutamine activates uridylyl-removing (UR) activity. Its function is as follows. Modifies, by uridylylation and deuridylylation, the PII regulatory proteins (GlnB and homologs), in response to the nitrogen status of the cell that GlnD senses through the glutamine level. Under low glutamine levels, catalyzes the conversion of the PII proteins and UTP to PII-UMP and PPi, while under higher glutamine levels, GlnD hydrolyzes PII-UMP to PII and UMP (deuridylylation). Thus, controls uridylylation state and activity of the PII proteins, and plays an important role in the regulation of nitrogen assimilation and metabolism. The protein is Bifunctional uridylyltransferase/uridylyl-removing enzyme of Pasteurella multocida (strain Pm70).